We begin with the raw amino-acid sequence, 197 residues long: Phospholipid hydroperoxide glutathione peroxidase (197 aa).

Ser-40 is modified (phosphoserine). Sec-73 is a catalytic residue. Sec-73 is a non-standard amino acid (selenocysteine).

The protein belongs to the glutathione peroxidase family. Monomer. Has a tendency to form higher mass oligomers. Interacts with FUNDC1; this interaction promotes GPX4 recruitment into mitochondria through TOM/TIM complex where it is degraded by mitophagy.

It is found in the mitochondrion. It localises to the cytoplasm. The enzyme catalyses a hydroperoxy polyunsaturated fatty acid + 2 glutathione = a hydroxy polyunsaturated fatty acid + glutathione disulfide + H2O. It catalyses the reaction (12S)-hydroperoxy-(5Z,8Z,10E,14Z)-eicosatetraenoate + 2 glutathione = (12S)-hydroxy-(5Z,8Z,10E,14Z)-eicosatetraenoate + glutathione disulfide + H2O. The catalysed reaction is (13S)-hydroperoxy-(9Z,11E)-octadecadienoate + 2 glutathione = (13S)-hydroxy-(9Z,11E)-octadecadienoate + glutathione disulfide + H2O. Essential antioxidant peroxidase that directly reduces phospholipid hydroperoxide even if they are incorporated in membranes and lipoproteins. Can also reduce fatty acid hydroperoxide, cholesterol hydroperoxide and thymine hydroperoxide. Plays a key role in protecting cells from oxidative damage by preventing membrane lipid peroxidation. Required to prevent cells from ferroptosis, a non-apoptotic cell death resulting from an iron-dependent accumulation of lipid reactive oxygen species. The presence of selenocysteine (Sec) versus Cys at the active site is essential for life: it provides resistance to overoxidation and prevents cells against ferroptosis. The presence of Sec at the active site is also essential for the survival of a specific type of parvalbumin-positive interneurons, thereby preventing against fatal epileptic seizures. May be required to protect cells from the toxicity of ingested lipid hydroperoxides. Required for normal sperm development and male fertility. Essential for maturation and survival of photoreceptor cells. Plays a role in a primary T-cell response to viral and parasitic infection by protecting T-cells from ferroptosis and by supporting T-cell expansion. Plays a role of glutathione peroxidase in platelets in the arachidonic acid metabolism. Reduces hydroperoxy ester lipids formed by a 15-lipoxygenase that may play a role as down-regulator of the cellular 15-lipoxygenase pathway. The chain is Phospholipid hydroperoxide glutathione peroxidase from Sapajus apella (Brown-capped capuchin).